Here is a 118-residue protein sequence, read N- to C-terminus: Large ribosomal subunit protein bL20 (118 aa).

It belongs to the bacterial ribosomal protein bL20 family.

Its function is as follows. Binds directly to 23S ribosomal RNA and is necessary for the in vitro assembly process of the 50S ribosomal subunit. It is not involved in the protein synthesizing functions of that subunit. In Azotobacter vinelandii (strain DJ / ATCC BAA-1303), this protein is Large ribosomal subunit protein bL20.